Here is a 100-residue protein sequence, read N- to C-terminus: Large ribosomal subunit protein uL23 (100 aa).

This sequence belongs to the universal ribosomal protein uL23 family. As to quaternary structure, part of the 50S ribosomal subunit. Contacts protein L29, and trigger factor when it is bound to the ribosome.

In terms of biological role, one of the early assembly proteins it binds 23S rRNA. One of the proteins that surrounds the polypeptide exit tunnel on the outside of the ribosome. Forms the main docking site for trigger factor binding to the ribosome. The chain is Large ribosomal subunit protein uL23 from Yersinia enterocolitica serotype O:8 / biotype 1B (strain NCTC 13174 / 8081).